The sequence spans 146 residues: Large ribosomal subunit protein uL15 (146 aa).

Residues 1–58 form a disordered region; sequence MKLNELSPPKGARTARKRKGRGPGSGLGKTAGKGHKGQKARSGGGVRPGFEGGQMPVH. Gly residues-rich tracts occupy residues 22–31 and 42–52; these read GPGSGLGKTA and SGGGVRPGFEG.

This sequence belongs to the universal ribosomal protein uL15 family. In terms of assembly, part of the 50S ribosomal subunit.

In terms of biological role, binds to the 23S rRNA. The polypeptide is Large ribosomal subunit protein uL15 (Desulfatibacillum aliphaticivorans).